The primary structure comprises 207 residues: Large ribosomal subunit protein uL4 (207 aa).

The disordered stretch occupies residues 48 to 87 (THAVKNRSAVSGGGKKPWRQKGTGRARQGSIRSPQFRGGG).

This sequence belongs to the universal ribosomal protein uL4 family. Part of the 50S ribosomal subunit.

In terms of biological role, one of the primary rRNA binding proteins, this protein initially binds near the 5'-end of the 23S rRNA. It is important during the early stages of 50S assembly. It makes multiple contacts with different domains of the 23S rRNA in the assembled 50S subunit and ribosome. Its function is as follows. Forms part of the polypeptide exit tunnel. The sequence is that of Large ribosomal subunit protein uL4 from Limosilactobacillus reuteri subsp. reuteri (strain JCM 1112) (Lactobacillus reuteri).